The following is a 361-amino-acid chain: Microtubule-associated protein Jupiter (361 aa).

Positions 1–15 (MISNYDITDSKSSSK) are enriched in polar residues. Disordered stretches follow at residues 1 to 38 (MISN…TPRN) and 70 to 99 (IGDN…TPGK). Ser-24 is subject to Phosphoserine. Residue Thr-35 is modified to Phosphothreonine. A compositionally biased stretch (basic and acidic residues) spans 73–87 (NPRRGQKPVDSHSRL). Thr-96 is subject to Phosphothreonine. Ser-105 is modified (phosphoserine). 2 stretches are compositionally biased toward low complexity: residues 125-134 (GSSTANTTNG) and 141-154 (SGSV…VSSS). Disordered stretches follow at residues 125-165 (GSST…SGSR) and 328-361 (GSTN…SGLW). A phosphoserine mark is found at Ser-143 and Ser-154. Polar residues predominate over residues 155 to 165 (TENLKMNSGSR).

The protein belongs to the MAP Jupiter family.

Its subcellular location is the nucleus. The protein localises to the cytoplasm. It localises to the cytoskeleton. It is found in the spindle. Its function is as follows. Binds to all microtubule populations. The polypeptide is Microtubule-associated protein Jupiter (Drosophila persimilis (Fruit fly)).